The sequence spans 511 residues: Glucans biosynthesis protein G (511 aa).

A signal peptide spans 1–22 (MMKMRWLSAAVMLTLYTSSSWA).

This sequence belongs to the OpgD/OpgG family.

Its subcellular location is the periplasm. The protein operates within glycan metabolism; osmoregulated periplasmic glucan (OPG) biosynthesis. Functionally, involved in the biosynthesis of osmoregulated periplasmic glucans (OPGs). This is Glucans biosynthesis protein G from Escherichia coli (strain K12 / MC4100 / BW2952).